Consider the following 930-residue polypeptide: Protein translocase subunit SecA (930 aa).

ATP is bound by residues Gln-83, 101–105 (GEGKT), and Asp-491.

It belongs to the SecA family. In terms of assembly, monomer and homodimer. Part of the essential Sec protein translocation apparatus which comprises SecA, SecYEG and auxiliary proteins SecDF. Other proteins may also be involved.

The protein localises to the cell inner membrane. It is found in the cellular thylakoid membrane. The protein resides in the cytoplasm. The catalysed reaction is ATP + H2O + cellular proteinSide 1 = ADP + phosphate + cellular proteinSide 2.. In terms of biological role, part of the Sec protein translocase complex. Interacts with the SecYEG preprotein conducting channel. Has a central role in coupling the hydrolysis of ATP to the transfer of proteins into and across the cell membrane, serving as an ATP-driven molecular motor driving the stepwise translocation of polypeptide chains across the membrane. Its function is as follows. Probably participates in protein translocation into and across both the cytoplasmic and thylakoid membranes in cyanobacterial cells. The polypeptide is Protein translocase subunit SecA (Nostoc sp. (strain PCC 7120 / SAG 25.82 / UTEX 2576)).